We begin with the raw amino-acid sequence, 140 residues long: Ribonuclease P protein component (140 aa).

The interval 33-54 (RALKPSSAKKSSLDTAAKTQPA) is disordered.

This sequence belongs to the RnpA family. Consists of a catalytic RNA component (M1 or rnpB) and a protein subunit.

It carries out the reaction Endonucleolytic cleavage of RNA, removing 5'-extranucleotides from tRNA precursor.. Functionally, RNaseP catalyzes the removal of the 5'-leader sequence from pre-tRNA to produce the mature 5'-terminus. It can also cleave other RNA substrates such as 4.5S RNA. The protein component plays an auxiliary but essential role in vivo by binding to the 5'-leader sequence and broadening the substrate specificity of the ribozyme. In Trichormus variabilis (strain ATCC 29413 / PCC 7937) (Anabaena variabilis), this protein is Ribonuclease P protein component.